The sequence spans 153 residues: Catabolic 3-dehydroquinase (153 aa).

The active-site Proton acceptor is the Tyr-24. Substrate-binding residues include Asn-75, His-81, and Asp-88. His-101 acts as the Proton donor in catalysis. Residues 102 to 103 (VS) and Arg-112 contribute to the substrate site.

It belongs to the type-II 3-dehydroquinase family. As to quaternary structure, homododecamer. Adopts a ring-like structure, composed of an arrangement of two hexameric rings stacked on top of one another.

It carries out the reaction 3-dehydroquinate = 3-dehydroshikimate + H2O. It participates in aromatic compound metabolism; 3,4-dihydroxybenzoate biosynthesis; 3,4-dihydroxybenzoate from 3-dehydroquinate: step 1/2. Its function is as follows. Is involved in the catabolism of quinate. Allows the utilization of quinate as carbon source via the beta-ketoadipate pathway. The sequence is that of Catabolic 3-dehydroquinase from Aspergillus oryzae (strain ATCC 42149 / RIB 40) (Yellow koji mold).